A 748-amino-acid chain; its full sequence is Catalase-peroxidase (748 aa).

The tryptophyl-tyrosyl-methioninium (Trp-Tyr) (with M-255) cross-link spans 96-229 (WHSAGTYRVA…LAAAHMGLIY (134 aa)). The active-site Proton acceptor is the His-97. A cross-link (tryptophyl-tyrosyl-methioninium (Tyr-Met) (with W-96)) is located at residues 229 to 255 (YVNPEGPDGNPDPIAAAKDIRTTFGRM). Heme b is bound at residue His-270.

This sequence belongs to the peroxidase family. Peroxidase/catalase subfamily. Homodimer or homotetramer. It depends on heme b as a cofactor. In terms of processing, formation of the three residue Trp-Tyr-Met cross-link is important for the catalase, but not the peroxidase activity of the enzyme.

The protein localises to the cytoplasm. The enzyme catalyses H2O2 + AH2 = A + 2 H2O. It carries out the reaction 2 H2O2 = O2 + 2 H2O. Functionally, bifunctional enzyme with both catalase and broad-spectrum peroxidase activity. Plays a crucial role in oxidative stress response during infection. Acts as an antigen and elicits antibody response in P.marneffei-infected AIDS patients, healthy people working in mycological laboratory, and healthy people in an endemic area. This chain is Catalase-peroxidase, found in Talaromyces marneffei (Penicillium marneffei).